A 325-amino-acid polypeptide reads, in one-letter code: Tagatose 1,6-diphosphate aldolase (325 aa).

The protein belongs to the aldolase LacD family.

It catalyses the reaction D-tagatofuranose 1,6-bisphosphate = D-glyceraldehyde 3-phosphate + dihydroxyacetone phosphate. It functions in the pathway carbohydrate metabolism; D-tagatose 6-phosphate degradation; D-glyceraldehyde 3-phosphate and glycerone phosphate from D-tagatose 6-phosphate: step 2/2. The sequence is that of Tagatose 1,6-diphosphate aldolase from Staphylococcus epidermidis (strain ATCC 12228 / FDA PCI 1200).